The primary structure comprises 227 residues: PKHD-type hydroxylase BURPS668_A1690 (227 aa).

The Fe2OG dioxygenase domain maps to 78–178 (KVFPPLFNRY…RVASFFWIQS (101 aa)). Fe cation-binding residues include histidine 96, aspartate 98, and histidine 159. Arginine 169 is a binding site for 2-oxoglutarate.

It depends on Fe(2+) as a cofactor. The cofactor is L-ascorbate.

The protein is PKHD-type hydroxylase BURPS668_A1690 of Burkholderia pseudomallei (strain 668).